The chain runs to 360 residues: Histidinol-phosphate aminotransferase (360 aa).

At lysine 218 the chain carries N6-(pyridoxal phosphate)lysine.

This sequence belongs to the class-II pyridoxal-phosphate-dependent aminotransferase family. Histidinol-phosphate aminotransferase subfamily. Homodimer. It depends on pyridoxal 5'-phosphate as a cofactor.

It carries out the reaction L-histidinol phosphate + 2-oxoglutarate = 3-(imidazol-4-yl)-2-oxopropyl phosphate + L-glutamate. Its pathway is amino-acid biosynthesis; L-histidine biosynthesis; L-histidine from 5-phospho-alpha-D-ribose 1-diphosphate: step 7/9. This chain is Histidinol-phosphate aminotransferase, found in Chlorobium phaeovibrioides (strain DSM 265 / 1930) (Prosthecochloris vibrioformis (strain DSM 265)).